Reading from the N-terminus, the 264-residue chain is MESGFTSKDAYLSHFNPQDYLEKYYNFGAKHSAEDQILRHLLKILFKIFCLDGVKGDLLIDIGSGPTIYQLLSACESFKEIIATDYTDQNLQELEKWLKKEPGAFDWSPVVTYVCELEGNRVKGTEKEEKLRRAVKRVLKCDVTQSWPLGAVPLPPADCLLSTLCLHAACPDLPTYRTALGNLRSLLKPGGFLVLVDALKSSYYMIGEQRFSSLCLGQEAVEAAVREAGYTIEHFEVISQSYSSTMANNEGLFSLVGRKLSPCV.

S-adenosyl-L-methionine is bound by residues Tyr-20, Tyr-25, Gly-63, Tyr-69, Asp-85, and Asn-90. At Arg-132 the chain carries Citrulline; alternate. Residues 142–143 (DV) and Thr-163 each bind S-adenosyl-L-methionine. Positions 197 and 213 each coordinate nicotinamide.

Belongs to the class I-like SAM-binding methyltransferase superfamily. NNMT/PNMT/TEMT family. Monomer. Post-translationally, deiminated by PADI1 and PADI2.

It is found in the cytoplasm. It carries out the reaction nicotinamide + S-adenosyl-L-methionine = 1-methylnicotinamide + S-adenosyl-L-homocysteine. It functions in the pathway cofactor metabolism. The protein operates within amino-acid degradation. Its function is as follows. Catalyzes the N-methylation of nicotinamide using the universal methyl donor S-adenosyl-L-methionine to form N1-methylnicotinamide and S-adenosyl-L-homocysteine, a predominant nicotinamide/vitamin B3 clearance pathway. Plays a central role in regulating cellular methylation potential, by consuming S-adenosyl-L-methionine and limiting its availability for other methyltransferases. Actively mediates genome-wide epigenetic and transcriptional changes through hypomethylation of repressive chromatin marks, such as H3K27me3. In a developmental context, contributes to low levels of the repressive histone marks that characterize pluripotent embryonic stem cell pre-implantation state. Acts as a metabolic regulator primarily on white adipose tissue energy expenditure as well as hepatic gluconeogenesis and cholesterol biosynthesis. In white adipocytes, regulates polyamine flux by consuming S-adenosyl-L-methionine which provides for propylamine group in polyamine biosynthesis, whereas by consuming nicotinamide controls NAD(+) levels through the salvage pathway. Via its product N1-methylnicotinamide regulates protein acetylation in hepatocytes, by repressing the ubiquitination and increasing the stability of SIRT1 deacetylase. Can also N-methylate other pyridines structurally related to nicotinamide and play a role in xenobiotic detoxification. In Sus scrofa (Pig), this protein is Nicotinamide N-methyltransferase (NNMT).